The sequence spans 416 residues: Glutamyl-tRNA reductase (416 aa).

Substrate-binding positions include Thr48–Arg51, Ser104, Glu109–Gln111, and Gln115. The active-site Nucleophile is the Cys49. Gly184 to Ile189 provides a ligand contact to NADP(+).

It belongs to the glutamyl-tRNA reductase family. As to quaternary structure, homodimer.

The enzyme catalyses (S)-4-amino-5-oxopentanoate + tRNA(Glu) + NADP(+) = L-glutamyl-tRNA(Glu) + NADPH + H(+). It participates in porphyrin-containing compound metabolism; protoporphyrin-IX biosynthesis; 5-aminolevulinate from L-glutamyl-tRNA(Glu): step 1/2. In terms of biological role, catalyzes the NADPH-dependent reduction of glutamyl-tRNA(Glu) to glutamate 1-semialdehyde (GSA). This Dechloromonas aromatica (strain RCB) protein is Glutamyl-tRNA reductase.